Here is a 156-residue protein sequence, read N- to C-terminus: Deoxyuridine 5'-triphosphate nucleotidohydrolase (156 aa).

Substrate-binding positions include R74–G76, N87, T91–D93, and K101.

It belongs to the dUTPase family. Mg(2+) serves as cofactor.

It carries out the reaction dUTP + H2O = dUMP + diphosphate + H(+). Its pathway is pyrimidine metabolism; dUMP biosynthesis; dUMP from dCTP (dUTP route): step 2/2. Functionally, this enzyme is involved in nucleotide metabolism: it produces dUMP, the immediate precursor of thymidine nucleotides and it decreases the intracellular concentration of dUTP so that uracil cannot be incorporated into DNA. The chain is Deoxyuridine 5'-triphosphate nucleotidohydrolase from Wolbachia sp. subsp. Brugia malayi (strain TRS).